The following is a 495-amino-acid chain: Steroid 21-hydroxylase (495 aa).

Arginine 92 and lysine 121 together coordinate heme b. Arginine 234 contacts 17alpha-hydroxyprogesterone. Position 234 (arginine 234) interacts with progesterone. 3 residues coordinate heme b: histidine 366, arginine 427, and cysteine 429.

The protein belongs to the cytochrome P450 family. Requires heme b as cofactor.

It localises to the endoplasmic reticulum membrane. The protein localises to the microsome membrane. The catalysed reaction is progesterone + reduced [NADPH--hemoprotein reductase] + O2 = 21-hydroxyprogesterone + oxidized [NADPH--hemoprotein reductase] + H2O + H(+). It carries out the reaction 17alpha-hydroxyprogesterone + reduced [NADPH--hemoprotein reductase] + O2 = 11-deoxycortisol + oxidized [NADPH--hemoprotein reductase] + H2O + H(+). In terms of biological role, a cytochrome P450 monooxygenase that plays a major role in adrenal steroidogenesis. Catalyzes the hydroxylation at C-21 of progesterone and 17alpha-hydroxyprogesterone to respectively form 11-deoxycorticosterone and 11-deoxycortisol, intermediate metabolites in the biosynthetic pathway of mineralocorticoids and glucocorticoids. Mechanistically, uses molecular oxygen inserting one oxygen atom into a substrate, and reducing the second into a water molecule, with two electrons provided by NADPH via cytochrome P450 reductase (CPR; NADPH-ferrihemoprotein reductase). This chain is Steroid 21-hydroxylase (CYP21A2), found in Homo sapiens (Human).